A 225-amino-acid chain; its full sequence is C-reactive protein (225 aa).

An N-terminal signal peptide occupies residues 1-18 (MLVVFLCLLSVTLEATEG). Residues 23 to 225 (SGKVLQFKTA…TGNVLVATDN (203 aa)) form the Pentraxin (PTX) domain. The cysteines at positions 54 and 116 are disulfide-linked. Positions 78, 157, 158, 159, and 169 each coordinate Ca(2+).

Belongs to the pentraxin family. In terms of assembly, homotrimer. Ca(2+) serves as cofactor.

Its subcellular location is the secreted. Functionally, displays several functions associated with host defense: it promotes agglutination, bacterial capsular swelling, phagocytosis, and complement fixation through its calcium-dependent binding to phosphorylcholine. The polypeptide is C-reactive protein (Danio rerio (Zebrafish)).